Reading from the N-terminus, the 657-residue chain is uncharacterized protein (657 aa).

Ser114 bears the Phosphoserine mark. Disordered regions lie at residues 142–216 (LASQ…SDEE), 228–248 (SSRE…EEEE), 291–312 (STRS…SHTP), 335–354 (SSPG…EGAD), and 399–522 (AEAS…SGRH). The segment covering 143–169 (ASQNTDKTSQNQARELPVTENNAQNAK) has biased composition (polar residues). The span at 190 to 206 (AGKERTLQTPKQKEPAR) shows a compositional bias: basic and acidic residues. Ser213 is subject to Phosphoserine. 2 stretches are compositionally biased toward polar residues: residues 234 to 243 (TNQGFSSANV) and 301 to 312 (SHVSSDTASHTP). A compositionally biased stretch (acidic residues) spans 343–354 (ETVDEPVSEGAD). The span at 437–451 (SASSASAIQQDSTSS) shows a compositional bias: low complexity. The span at 462–484 (NTVSSAYSEDFENSPSLTASEPT) shows a compositional bias: polar residues. A compositionally biased stretch (basic and acidic residues) spans 485 to 495 (AHSKESLDRTL). Residues 499 to 513 (SESSSSVKTDLPQTA) show a composition bias toward polar residues.

This is an uncharacterized protein from Homo sapiens (Human).